A 1503-amino-acid polypeptide reads, in one-letter code: Rho GTPase-activating protein 5 (1503 aa).

FF domains are found at residues 267–325 (QLVV…HIEQ), 366–420 (KLME…HVQH), 427–481 (RIEM…HQRE), and 482–548 (IVEK…HIGF). Tyrosine 550 is subject to 3'-nitrotyrosine. Residues serine 590 and serine 765 each carry the phosphoserine modification. Positions 590-763 (STNIDKVNLF…LESVKHNLDV (174 aa)) constitute a pG1 pseudoGTPase domain. Residues 779–944 (RIVMCAMCGD…FSDVLEKKNM (166 aa)) enclose the pG2 pseudoGTPase domain. Residues serine 951 and serine 968 each carry the phosphoserine modification. Disordered regions lie at residues 975–1004 (YNNY…LPTP), 1022–1050 (HSTP…PKTN), and 1069–1091 (NPRK…SDNY). Residues 1036–1045 (VPPPIKPKPV) show a composition bias toward pro residues. The residue at position 1115 (serine 1115) is a Phosphoserine. Disordered regions lie at residues 1129 to 1157 (NTQG…YKYK) and 1169 to 1255 (YRRT…TRRN). Residues 1141–1151 (RTSKGHGERRP) show a composition bias toward basic and acidic residues. Phosphoserine occurs at positions 1196, 1203, and 1219. The Rho-GAP domain maps to 1263-1450 (MPLQDLVTAE…TFIQQCQFFF (188 aa)).

As to quaternary structure, may interact with RASA1/p120GAP. As to expression, expressed in spinal cord, cerebellum, kidney, testis and lung.

It is found in the cytoplasm. The protein resides in the cell membrane. In terms of biological role, GTPase-activating protein for Rho family members. This chain is Rho GTPase-activating protein 5 (Arhgap5), found in Mus musculus (Mouse).